The primary structure comprises 403 residues: Methylthioribose-1-phosphate isomerase (403 aa).

Catalysis depends on Asp280, which acts as the Proton donor.

It belongs to the eIF-2B alpha/beta/delta subunits family. MtnA subfamily.

It is found in the cytoplasm. It localises to the nucleus. The catalysed reaction is 5-(methylsulfanyl)-alpha-D-ribose 1-phosphate = 5-(methylsulfanyl)-D-ribulose 1-phosphate. It participates in amino-acid biosynthesis; L-methionine biosynthesis via salvage pathway; L-methionine from S-methyl-5-thio-alpha-D-ribose 1-phosphate: step 1/6. Catalyzes the interconversion of methylthioribose-1-phosphate (MTR-1-P) into methylthioribulose-1-phosphate (MTRu-1-P). This chain is Methylthioribose-1-phosphate isomerase, found in Eremothecium gossypii (strain ATCC 10895 / CBS 109.51 / FGSC 9923 / NRRL Y-1056) (Yeast).